A 539-amino-acid chain; its full sequence is Laccase-1 (539 aa).

A signal peptide spans 1–21 (MAFTAISLFLAALGVINTAFA). Plastocyanin-like domains are found at residues 37–154 (AEVN…YDPE) and 166–309 (ESTV…HYLG). An N-linked (GlcNAc...) asparagine glycan is attached at Asn-78. His-88 and His-90 together coordinate Cu cation. 2 disulfides stabilise this stretch: Cys-109–Cys-513 and Cys-141–Cys-228. Asn-120 carries N-linked (GlcNAc...) asparagine glycosylation. Cu cation is bound by residues His-133 and His-135. Asn-202, Asn-233, Asn-240, Asn-293, Asn-318, Asn-353, Asn-385, and Asn-405 each carry an N-linked (GlcNAc...) asparagine glycan. The Plastocyanin-like 3 domain maps to 374-495 (SPTVPVLLQI…GFAVVMAEDP (122 aa)). The Cu cation site is built by His-421, His-424, and His-426. Asn-457 is a glycosylation site (N-linked (GlcNAc...) asparagine). Cu cation contacts are provided by His-476, Cys-477, His-478, and His-482. Residue Asn-532 is glycosylated (N-linked (GlcNAc...) asparagine).

The protein belongs to the multicopper oxidase family. Cu cation is required as a cofactor.

The protein resides in the secreted. The enzyme catalyses 4 hydroquinone + O2 = 4 benzosemiquinone + 2 H2O. With respect to regulation, inhibited by chloride ions. Inhibited by citrate. Inhibited by oxalate. Activated by acetate. Its function is as follows. In vitro, has activity towards 2,2'-azino-bis(3-ethylbenzthiazoline-6-sulfonic acid) (ABTS), 2,6-dimethoxy-phenol, and guaiacol. Although brown rot fungi preferentially degrade hemicellulose and cellulose, the enzyme may contribute to generating small amounts of lignin breakdown products required for catalytic reactions. In Fomitopsis schrenkii (Brown rot fungus), this protein is Laccase-1.